A 472-amino-acid polypeptide reads, in one-letter code: Serralysin A (472 aa).

Residues methionine 1–serine 17 constitute a propeptide that is removed on maturation. Histidine 186 serves as a coordination point for Zn(2+). The active site involves glutamate 187. Zn(2+) is bound by residues histidine 190 and tyrosine 221. Positions 258, 260, 262, 290, 292, 293, 332, 334, 339, 341, 343, 348, 350, 352, 356, 357, 358, 359, 361, 365, 366, 367, 368, 370, 374, 375, 377, 379, 388, 395, and 405 each coordinate Ca(2+). 2 Hemolysin-type calcium-binding repeats span residues isoleucine 337–leucine 354 and arginine 355–leucine 372.

The protein belongs to the peptidase M10B family. Requires Ca(2+) as cofactor. Zn(2+) is required as a cofactor.

It localises to the secreted. The enzyme catalyses Preferential cleavage of bonds with hydrophobic residues in P1'.. This chain is Serralysin A (prtA), found in Dickeya chrysanthemi (Pectobacterium chrysanthemi).